Consider the following 333-residue polypeptide: MRRGQNGVALITVLLVVAVVTIVCAGLIIRQQLAIRSSANQLHVRQAWHYALGGERLAEAVLRRDLRQGGENTREPVDHLGEAWARPMTPFKLDDGGELRVRIEDPSGRFNLNGLVRKRKVKPDSVKQFRRLLATLGMKEEIVQGLPDRLADWLDADQNPQGEQGAEDNQYLLEAPAYRAANRSFKDVSELRLLKLSEADYRRLLPFVSALPEDAPLNVNTASVPVLAAMFEIDPGQAENIVDARGREGFQSKDDFTKHLTQLGSKTGNVSYAVGTRYFQVISEVSLGDRRQVLVSTLQRGKDGKIRVMARDMGQGGLPIPSTGGDDWKKDER.

Residues 1–7 (MRRGQNG) constitute a propeptide, leader sequence. A helical membrane pass occupies residues 8–29 (VALITVLLVVAVVTIVCAGLII). Over 30 to 333 (RQQLAIRSSA…GGDDWKKDER (304 aa)) the chain is Periplasmic. Positions 313–333 (MGQGGLPIPSTGGDDWKKDER) are disordered.

The protein belongs to the GSP K family. As to quaternary structure, type II secretion is composed of four main components: the outer membrane complex, the inner membrane complex, the cytoplasmic secretion ATPase and the periplasm-spanning pseudopilus. Interacts with the tip of the type II pseudopilus subunits XcpV, XcpU and XcpW. Interacts with core component XcpT. Cleaved by prepilin peptidase.

It localises to the cell inner membrane. Its function is as follows. Component of the type II secretion system required for the energy-dependent secretion of extracellular factors such as proteases and toxins from the periplasm. Plays a role in pseudopilus assembly and seems to control its length. Interacts with the pseudopilus tip complex that is critical for the recognition and binding of secretion substrates. Type II pseudopilus confers increased bacterial adhesive capabilities. The polypeptide is Type II secretion system protein K (xcpX) (Pseudomonas aeruginosa (strain ATCC 15692 / DSM 22644 / CIP 104116 / JCM 14847 / LMG 12228 / 1C / PRS 101 / PAO1)).